Here is a 340-residue protein sequence, read N- to C-terminus: COP9 signalosome complex subunit 5 (340 aa).

In terms of domain architecture, MPN spans 52 to 189 (VRISATALIK…IGAFRTYPAD (138 aa)). 3 residues coordinate Zn(2+): H135, H137, and D148. The JAMM motif motif lies at 135 to 148 (HSHPGYGCWLSGID).

Belongs to the peptidase M67A family. CSN5 subfamily. In terms of assembly, component of the COP9 signalosome (CSN) complex.

The protein resides in the cytoplasm. The protein localises to the nucleus. Its function is as follows. Catalytic Component of the COP9 signalosome (CSN) complex that acts as an regulator of the ubiquitin (Ubl) conjugation pathway by mediating the deneddylation of the cullin subunit of SCF-type E3 ubiquitin-protein ligase complexes. The protein is COP9 signalosome complex subunit 5 (RRI1) of Gibberella zeae (strain ATCC MYA-4620 / CBS 123657 / FGSC 9075 / NRRL 31084 / PH-1) (Wheat head blight fungus).